The sequence spans 715 residues: Metastasis-associated protein MTA1 (715 aa).

The 164-residue stretch at 1-164 (MAANMYRVGD…PQQKTLLADK (164 aa)) folds into the BAH domain. Residues 165–276 (GEIRVGNRYQ…KAISALVPQG (112 aa)) form the ELM2 domain. K182 is covalently cross-linked (Glycyl lysine isopeptide (Lys-Gly) (interchain with G-Cter in ubiquitin)). Positions 283-335 (DEMEEWSASEANLFEEALEKYGKDFTDIQQDFLPWKSLTSIIEYYYMWKTTDR) constitute an SANT domain. S386 is modified (phosphoserine). The GATA-type; atypical zinc-finger motif lies at 393 to 420 (CESCYTTQSYQWYSWGPPNMQCRLCASC). The interval 437-460 (DGERPGPNRNNMSPHGIPARSSGS) is disordered. S449 is subject to Phosphoserine. Residue K509 forms a Glycyl lysine isopeptide (Lys-Gly) (interchain with G-Cter in SUMO2 and SUMO3) linkage. Position 522 is a phosphoserine (S522). Basic and acidic residues predominate over residues 542-552 (ETHPRPPKPDP). The disordered stretch occupies residues 542-590 (ETHPRPPKPDPVKSSSSVLSSLTPAKSAPVINNGSPTILGKRSYEQHNG). An SH3-binding motif is present at residues 545-552 (PRPPKPDP). K549 participates in a covalent cross-link: Glycyl lysine isopeptide (Lys-Gly) (interchain with G-Cter in SUMO2). Over residues 553 to 565 (VKSSSSVLSSLTP) the composition is skewed to low complexity. At T564 the chain carries Phosphothreonine. The residue at position 576 (S576) is a Phosphoserine. Position 578 is a phosphothreonine (T578). The residue at position 626 (K626) is an N6-acetyllysine; alternate. K626 participates in a covalent cross-link: Glycyl lysine isopeptide (Lys-Gly) (interchain with G-Cter in ubiquitin); alternate. S639 is subject to Phosphoserine. Residues 656 to 686 (DVFYMATEETRKIRKLLSSSETKRAARRPYK) form an interaction with RBBP4 region. The tract at residues 673–715 (SSSETKRAARRPYKPIALRQSQALPLRPPPPAPVNDEPIVIED) is disordered. Residues 696-705 (LPLRPPPPAP) carry the SH3-binding motif. Residues 711–715 (IVIED) carry the SUMO interaction motif 1 (SIM); crucial for efficient sumoylation motif.

Belongs to the metastasis-associated protein family. As to quaternary structure, component of the nucleosome remodeling and deacetylase (NuRD) repressor complex, composed of core proteins MTA1, MTA2, MTA3, RBBP4, RBBP7, HDAC1, HDAC2, MBD2, MBD3, and peripherally associated proteins CDK2AP1, CDK2AP2, GATAD2A, GATAD2B, CHD3, CHD4 and CHD5. The exact stoichiometry of the NuRD complex is unknown, and some subunits such as MBD2 and MBD3, GATAD2A and GATAD2B, and CHD3, CHD4 and CHD5 define mutually exclusive NuRD complexes. Interacts with RBBP4; the interaction is direct. Interacts with BMAL1. Interacts with CLOCK. Interacts with COP1. Interacts with CSNK1G2 in the cytoplasm. Interacts with EP300. Interacts with HDAC2. Interacts with ITGB3BP/CENPR. Interacts with MBD3L2. Interacts with MDM2. Interacts with NACC2. Interacts with p53/TP53. Interacts with PIAS1. Interacts with PIAS3. Interacts with PIAS4. Interacts with PWWP2A. Interacts with PWWP2B. Interacts with SENP1. Interacts with SENP2. Interacts with SIX3; facilitates the binding of SIX3 to the core DNA motif of SIX3 promoter. Interacts with SUMO1. Interacts with SUMO2. Interacts with TFCP2L1; which is indispensable for TFCP2L1-mediated self-renewal-promoting effect and endoderm-inhibiting action. Interacts with TFAP2C. Interacts with TPR. Interacts with UBE2I/UBC9. Post-translationally, phosphorylation by CSNK1G2/CK1 triggered by estrogen enhances corepression of estrogen receptor (ER). Acetylation is essential for its transcriptional coactivator activity. In terms of processing, sumoylation positively regulates its transcriptional corepressor activity but does not affect the protein stability. Sumoylated preferentially by SUMO2 or SUMO3 than SUMO1. Sumoylation is enhanced by PIAS1/3/4 and preferentially sumoylated by SUMO2 in the presence of PIAS1/3/4. Desumoylated by SENP1. Post-translationally, ubiquitinated by COP1, which leads to proteasomal degradation. As to expression, widely expressed but not in skeletal muscle. Highly expressed in the brain, liver, kidney and cardiac muscle and in mammary tumors.

Its subcellular location is the nucleus. It is found in the nucleus envelope. The protein localises to the cytoplasm. It localises to the cytoskeleton. Transcriptional coregulator which can act as both a transcriptional corepressor and coactivator. Acts as a component of the histone deacetylase NuRD complex which participates in the remodeling of chromatin. In the NuRD complex, regulates transcription of its targets by modifying the acetylation status of the target chromatin and cofactor accessibility to the target DNA. In conjunction with other components of NuRD, acts as a transcriptional corepressor of BRCA1, ESR1, TFF1 and CDKN1A. Acts as a transcriptional coactivator of BCAS3, PAX5 and SUMO2, independent of the NuRD complex. Stimulates the expression of WNT1 by inhibiting the expression of its transcriptional corepressor SIX3. Regulates p53-dependent and -independent DNA repair processes following genotoxic stress. Regulates the stability and function of p53/TP53 by inhibiting its ubiquitination by COP1 and MDM2 thereby regulating the p53-dependent DNA repair. Plays a role in the regulation of the circadian clock and is essential for the generation and maintenance of circadian rhythms under constant light and for normal entrainment of behavior to light-dark (LD) cycles. Positively regulates the CLOCK-BMAL1 heterodimer mediated transcriptional activation of its own transcription and the transcription of CRY1. Regulates deacetylation of BMAL1 by regulating SIRT1 expression, resulting in derepressing CRY1-mediated transcription repression. With Tfcp2l1, promotes establishment and maintenance of pluripotency in embryonic stem cells (ESCs) and inhibits endoderm differentiation. This chain is Metastasis-associated protein MTA1 (Mta1), found in Mus musculus (Mouse).